A 166-amino-acid chain; its full sequence is MSKAMALRRLMKEYKELTENGPDGITAGPSNEDDFFTWDCLIQGPDGTPFEGGLYPATLKFPSDYPLGPPTLKFECEFFHPNVYKDGTVCISILHAPGDDPNMYESSSERWSPVQSVEKILLSVMSMLAEPNDESGANIDACKMWREDREEYCRVVRRLARKTLGL.

The UBC core domain maps to 5-165 (MALRRLMKEY…VRRLARKTLG (161 aa)). C90 functions as the Glycyl thioester intermediate in the catalytic mechanism. A Glycyl cysteine thioester (Cys-Gly) (interchain with G-Cter in ubiquitin) cross-link involves residue C90.

It belongs to the ubiquitin-conjugating enzyme family. In terms of processing, autoubiquitinated at Cys-90; undergoes 'Lys-48'-linked polyubiquitination, which leads to proteasome-dependent protein degradation.

The enzyme catalyses S-ubiquitinyl-[E1 ubiquitin-activating enzyme]-L-cysteine + [E2 ubiquitin-conjugating enzyme]-L-cysteine = [E1 ubiquitin-activating enzyme]-L-cysteine + S-ubiquitinyl-[E2 ubiquitin-conjugating enzyme]-L-cysteine.. It participates in protein modification; protein ubiquitination. In terms of biological role, catalyzes the covalent attachment of ubiquitin to other proteins. Functions in degradation of misfolded or regulated proteins localized in the endoplasmic reticulum (ER) lumen or membrane via the ubiquitin-proteasome system. Cognate E2 conjugating enzyme for the doa10 ubiquitin ligase complex, which is part of the ERAD-C pathway responsible for the rapid degradation of membrane proteins with misfolded cytoplasmic domains, and of the hrd1 ubiquitin ligase complex, which is part of the ERAD-L and ERAD-M pathways responsible for the rapid degradation of soluble lumenal and membrane proteins with misfolded lumenal domains (ERAD-L), or ER-membrane proteins with misfolded transmembrane domains (ERAD-M). Together with hrd1, required for the degradation of the transcription factor sre1 precursor in the absence of its binding partner scp1. Has a role in the formation of chromatin structures that influence the localization of transcriptional silencing factors. This is Ubiquitin-conjugating enzyme E2-18 kDa (ubc7) from Schizosaccharomyces pombe (strain 972 / ATCC 24843) (Fission yeast).